The following is a 128-amino-acid chain: Phosphoribosyl-AMP cyclohydrolase (128 aa).

D79 lines the Mg(2+) pocket. Zn(2+) is bound at residue C80. Residues D81 and D83 each coordinate Mg(2+). Residues C97 and C104 each coordinate Zn(2+).

The protein belongs to the PRA-CH family. Homodimer. It depends on Mg(2+) as a cofactor. The cofactor is Zn(2+).

The protein localises to the cytoplasm. It catalyses the reaction 1-(5-phospho-beta-D-ribosyl)-5'-AMP + H2O = 1-(5-phospho-beta-D-ribosyl)-5-[(5-phospho-beta-D-ribosylamino)methylideneamino]imidazole-4-carboxamide. It participates in amino-acid biosynthesis; L-histidine biosynthesis; L-histidine from 5-phospho-alpha-D-ribose 1-diphosphate: step 3/9. Functionally, catalyzes the hydrolysis of the adenine ring of phosphoribosyl-AMP. This Saccharophagus degradans (strain 2-40 / ATCC 43961 / DSM 17024) protein is Phosphoribosyl-AMP cyclohydrolase.